We begin with the raw amino-acid sequence, 499 residues long: Probable cytosol aminopeptidase (499 aa).

Mn(2+) contacts are provided by Lys263 and Asp268. Lys275 is a catalytic residue. Asp286, Asp345, and Glu347 together coordinate Mn(2+). The active site involves Arg349.

The protein belongs to the peptidase M17 family. The cofactor is Mn(2+).

The protein resides in the cytoplasm. It catalyses the reaction Release of an N-terminal amino acid, Xaa-|-Yaa-, in which Xaa is preferably Leu, but may be other amino acids including Pro although not Arg or Lys, and Yaa may be Pro. Amino acid amides and methyl esters are also readily hydrolyzed, but rates on arylamides are exceedingly low.. The catalysed reaction is Release of an N-terminal amino acid, preferentially leucine, but not glutamic or aspartic acids.. Presumably involved in the processing and regular turnover of intracellular proteins. Catalyzes the removal of unsubstituted N-terminal amino acids from various peptides. This Bradyrhizobium sp. (strain BTAi1 / ATCC BAA-1182) protein is Probable cytosol aminopeptidase.